Reading from the N-terminus, the 303-residue chain is Mycothiol acetyltransferase (303 aa).

N-acetyltransferase domains follow at residues 4-141 (ITVR…RSLA) and 154-303 (IVLR…ANGA). Glu38 provides a ligand contact to 1D-myo-inositol 2-(L-cysteinylamino)-2-deoxy-alpha-D-glucopyranoside. An acetyl-CoA-binding site is contributed by 80–82 (AAV). Positions 181, 223, and 234 each coordinate 1D-myo-inositol 2-(L-cysteinylamino)-2-deoxy-alpha-D-glucopyranoside. Residues 238–240 (VGI) and 245–251 (QGRGLGR) contribute to the acetyl-CoA site. Tyr272 serves as a coordination point for 1D-myo-inositol 2-(L-cysteinylamino)-2-deoxy-alpha-D-glucopyranoside. 277–282 (NTAAVN) contributes to the acetyl-CoA binding site.

It belongs to the acetyltransferase family. MshD subfamily. Monomer.

It carries out the reaction 1D-myo-inositol 2-(L-cysteinylamino)-2-deoxy-alpha-D-glucopyranoside + acetyl-CoA = mycothiol + CoA + H(+). Its function is as follows. Catalyzes the transfer of acetyl from acetyl-CoA to desacetylmycothiol (Cys-GlcN-Ins) to form mycothiol. The chain is Mycothiol acetyltransferase from Nocardia farcinica (strain IFM 10152).